Consider the following 378-residue polypeptide: Merozoite surface protein P41 (378 aa).

Positions 1 to 20 (MKGVIFCLVVLLWRQAWVSS) are cleaved as a signal peptide. Residues 21–133 (KSHKCDFTKE…LKINRFLKDD (113 aa)) form the 6-Cys 1 domain. 3 disulfide bridges follow: C25–C42, C56–C113, and C64–C111. N77, N149, N182, and N205 each carry an N-linked (GlcNAc...) asparagine glycan. The region spanning 241–375 (VIKGCDFGNN…GESEVVLNSF (135 aa)) is the 6-Cys 2 domain. 3 cysteine pairs are disulfide-bonded: C245–C270, C284–C348, and C297–C346. N351 carries an N-linked (GlcNAc...) asparagine glycan.

As to quaternary structure, heterodimer; heterodimerizes with PF12. May form an antiparallel heterodimer with PF12. In terms of processing, processed into a soluble form.

It localises to the cell surface. It is found in the cell membrane. In Plasmodium falciparum (isolate 3D7), this protein is Merozoite surface protein P41 (PF41).